A 395-amino-acid polypeptide reads, in one-letter code: Carbohydrate sulfotransferase 5 (395 aa).

The Cytoplasmic segment spans residues 1 to 7 (MRLPRFS). The helical; Signal-anchor for type II membrane protein transmembrane segment at 8-26 (STVMLSLLMVQTGILVFLV) threads the bilayer. Over 27–395 (SRQVPSSPAG…ASSTEKQPES (369 aa)) the chain is Lumenal. Position 49–55 (49–55 (WRSGSSF)) interacts with 3'-phosphoadenylyl sulfate. Residues Asn116 and Asn142 are each glycosylated (N-linked (GlcNAc...) asparagine). 202 to 210 (RDPRAVLRS) contacts 3'-phosphoadenylyl sulfate. 2 N-linked (GlcNAc...) asparagine glycosylation sites follow: Asn229 and Asn305.

This sequence belongs to the sulfotransferase 1 family. Gal/GlcNAc/GalNAc subfamily. In terms of tissue distribution, expressed in cornea.

Its subcellular location is the golgi apparatus membrane. In terms of biological role, sulfotransferase that utilizes 3'-phospho-5'-adenylyl sulfate (PAPS) as sulfonate donor to catalyze the transfer of sulfate to position 6 of non-reducing N-acetylglucosamine (GlcNAc) residues of keratan. Mediates sulfation of keratan in cornea. Keratan sulfate plays a central role in maintaining corneal transparency. Acts on the non-reducing terminal GlcNAc of short and long carbohydrate substrates that have poly-N-acetyllactosamine structures. May also have activity toward O-linked sugars of mucin-type acceptors. The protein is Carbohydrate sulfotransferase 5 (Chst5) of Mus musculus (Mouse).